We begin with the raw amino-acid sequence, 419 residues long: Gamma-glutamyl phosphate reductase (419 aa).

It belongs to the gamma-glutamyl phosphate reductase family.

The protein resides in the cytoplasm. The catalysed reaction is L-glutamate 5-semialdehyde + phosphate + NADP(+) = L-glutamyl 5-phosphate + NADPH + H(+). The protein operates within amino-acid biosynthesis; L-proline biosynthesis; L-glutamate 5-semialdehyde from L-glutamate: step 2/2. Catalyzes the NADPH-dependent reduction of L-glutamate 5-phosphate into L-glutamate 5-semialdehyde and phosphate. The product spontaneously undergoes cyclization to form 1-pyrroline-5-carboxylate. The protein is Gamma-glutamyl phosphate reductase of Tolumonas auensis (strain DSM 9187 / NBRC 110442 / TA 4).